Reading from the N-terminus, the 398-residue chain is G2/mitotic-specific cyclin-B2 (398 aa).

Threonine 8 bears the Phosphothreonine mark. A phosphoserine mark is found at serine 11, serine 77, and serine 92. Phosphothreonine is present on threonine 94. Residues serine 99, serine 392, and serine 398 each carry the phosphoserine modification.

Belongs to the cyclin family. Cyclin AB subfamily. In terms of assembly, interacts with the CDK1 protein kinase to form a serine/threonine kinase holoenzyme complex also known as maturation promoting factor (MPF). The cyclin subunit imparts substrate specificity to the complex.

In terms of biological role, essential for the control of the cell cycle at the G2/M (mitosis) transition. The polypeptide is G2/mitotic-specific cyclin-B2 (CCNB2) (Homo sapiens (Human)).